We begin with the raw amino-acid sequence, 302 residues long: NAD kinase (302 aa).

D79 (proton acceptor) is an active-site residue. NAD(+) contacts are provided by residues 79–80 (DG), 153–154 (ND), R181, D183, 194–199 (TAYALS), A218, and Q252.

This sequence belongs to the NAD kinase family. It depends on a divalent metal cation as a cofactor.

It is found in the cytoplasm. It catalyses the reaction NAD(+) + ATP = ADP + NADP(+) + H(+). In terms of biological role, involved in the regulation of the intracellular balance of NAD and NADP, and is a key enzyme in the biosynthesis of NADP. Catalyzes specifically the phosphorylation on 2'-hydroxyl of the adenosine moiety of NAD to yield NADP. The protein is NAD kinase of Ralstonia nicotianae (strain ATCC BAA-1114 / GMI1000) (Ralstonia solanacearum).